A 192-amino-acid polypeptide reads, in one-letter code: Epoxyqueuosine reductase QueH (192 aa).

[4Fe-4S] cluster-binding residues include Cys9, Cys10, Cys87, and Cys90. Cys169 and Cys171 are disulfide-bonded.

Belongs to the QueH family.

The enzyme catalyses epoxyqueuosine(34) in tRNA + AH2 = queuosine(34) in tRNA + A + H2O. It functions in the pathway tRNA modification; tRNA-queuosine biosynthesis. Functionally, catalyzes the conversion of epoxyqueuosine (oQ) to queuosine (Q), which is a hypermodified base found in the wobble positions of tRNA(Asp), tRNA(Asn), tRNA(His) and tRNA(Tyr). The polypeptide is Epoxyqueuosine reductase QueH (Thermotoga maritima (strain ATCC 43589 / DSM 3109 / JCM 10099 / NBRC 100826 / MSB8)).